The sequence spans 98 residues: uncharacterized protein (98 aa).

The next 2 helical transmembrane spans lie at 14–34 and 41–61; these read FLVI…PVTA and MTGA…ASII.

Its subcellular location is the cell membrane. This is an uncharacterized protein from Haemophilus influenzae (strain ATCC 51907 / DSM 11121 / KW20 / Rd).